Consider the following 272-residue polypeptide: Proteasome subunit beta type-5 (272 aa).

The propeptide at Met1–Gly62 is removed in mature form. Thr63 serves as the catalytic Nucleophile.

Belongs to the peptidase T1B family. As to quaternary structure, the 26S proteasome consists of a 20S proteasome core and two 19S regulatory subunits. The 20S proteasome core is composed of 28 subunits that are arranged in four stacked rings, resulting in a barrel-shaped structure. The two end rings are each formed by seven alpha subunits, and the two central rings are each formed by seven beta subunits. The catalytic chamber with the active sites is on the inside of the barrel.

The protein resides in the cytoplasm. It localises to the nucleus. The enzyme catalyses Cleavage of peptide bonds with very broad specificity.. The proteasome is a multicatalytic proteinase complex which is characterized by its ability to cleave peptides with Arg, Phe, Tyr, Leu, and Glu adjacent to the leaving group at neutral or slightly basic pH. The proteasome has an ATP-dependent proteolytic activity. The chain is Proteasome subunit beta type-5 (psmB5) from Dictyostelium discoideum (Social amoeba).